Here is a 313-residue protein sequence, read N- to C-terminus: Olfactory receptor 1M1 (313 aa).

Residues 1-25 (MEPQNHTSASEFILLGLSEKPDHDP) lie on the Extracellular side of the membrane. An N-linked (GlcNAc...) asparagine glycan is attached at Asn5. The chain crosses the membrane as a helical span at residues 26-46 (VLFSLFLCMYMITVVGNLLII). Over 47 to 54 (LAISFDSH) the chain is Cytoplasmic. The chain crosses the membrane as a helical span at residues 55–75 (LHTPMYFFLANLSLVDFCLAT). Topologically, residues 76-97 (NTVPKMLVNIQTRNKSISYPCC) are extracellular. Asn89 carries an N-linked (GlcNAc...) asparagine glycan. Cys97 and Cys179 form a disulfide bridge. Residues 98-118 (LTQMYFFHFFGIMDSVLIAVM) traverse the membrane as a helical segment. Over 119–142 (AYDRFVAICHPLHYSTIMSPRLCG) the chain is Cytoplasmic. A helical transmembrane segment spans residues 143–163 (LLVGVPWVYSCFISLTHILLM). The Extracellular segment spans residues 164–196 (ARLVFCGKNELPHYFCDLTPLLRLSCTDTTVNK). A helical membrane pass occupies residues 197 to 217 (IFVLIVAGMVIATPFVCILAS). At 218 to 244 (YARIIVAIMKVPSAGGRKKAFSTCSSH) the chain is on the cytoplasmic side. Residues 245–265 (LSVVALFYGTTIGVYLCPSSV) traverse the membrane as a helical segment. Over 266 to 274 (RTAVKEKAS) the chain is Extracellular. The chain crosses the membrane as a helical span at residues 275 to 292 (AVMYTAVTPMLNPFIYSL). At 293–313 (RNRDLKGALKKIINRKISTSS) the chain is on the cytoplasmic side.

Belongs to the G-protein coupled receptor 1 family. As to expression, expressed in testis.

It is found in the cell membrane. Functionally, odorant receptor. The polypeptide is Olfactory receptor 1M1 (Mus musculus (Mouse)).